The primary structure comprises 581 residues: Coiled-coil domain-containing protein 102A (581 aa).

4 disordered regions span residues 1–61, 156–219, 496–517, and 534–581; these read MNHT…GLGC, QRVR…IGTD, QAED…SLDE, and SRLR…LQIP. The span at 39–59 shows a compositional bias: low complexity; it reads TPSPSGGTPSSSPPLLLSPGL. Residues 70-164 are a coiled coil; sequence REELRLRELE…AQRVRAEQSS (95 aa). Over residues 161–184 the composition is skewed to polar residues; that stretch reads EQSSPENASTAPESISSTASTHSN. Residues 185 to 202 are compositionally biased toward basic and acidic residues; sequence QPREAEIKQDNQDEEGVR. Residues 270-541 are a coiled coil; it reads AALEEDTSKL…LQSRLRRQQN (272 aa). The segment covering 559–581 has biased composition (acidic residues); the sequence is EDADGPPSDPDEDEEEELQLQIP.

The protein is Coiled-coil domain-containing protein 102A (ccdc102a) of Danio rerio (Zebrafish).